Reading from the N-terminus, the 233-residue chain is Large ribosomal subunit protein uL1 (233 aa).

The protein belongs to the universal ribosomal protein uL1 family. As to quaternary structure, part of the 50S ribosomal subunit.

Functionally, binds directly to 23S rRNA. The L1 stalk is quite mobile in the ribosome, and is involved in E site tRNA release. In terms of biological role, protein L1 is also a translational repressor protein, it controls the translation of the L11 operon by binding to its mRNA. In Deinococcus geothermalis (strain DSM 11300 / CIP 105573 / AG-3a), this protein is Large ribosomal subunit protein uL1.